We begin with the raw amino-acid sequence, 464 residues long: Arylsulfatase (464 aa).

Positions 1–20 (MNKKAMAAAVSMILAGGAHA) are cleaved as a signal peptide. Residues Asp34, Asp35, and Ser72 each coordinate Ca(2+). The Nucleophile role is filled by Ser72. Ser72 carries the post-translational modification 3-oxoalanine (Ser). His134 is an active-site residue. Ca(2+) is bound by residues Asp329 and Asn330.

This sequence belongs to the sulfatase family. Ca(2+) is required as a cofactor. In terms of processing, the conversion to 3-oxoalanine (also known as C-formylglycine, FGly), of a serine or cysteine residue in prokaryotes and of a cysteine residue in eukaryotes, is critical for catalytic activity.

It is found in the periplasm. It catalyses the reaction an aryl sulfate + H2O = a phenol + sulfate + H(+). Functionally, plays an important role in the mineralization of sulfates. The sequence is that of Arylsulfatase (atsA) from Klebsiella aerogenes (Enterobacter aerogenes).